The sequence spans 484 residues: Sialidase-4 (484 aa).

The FRIP motif motif lies at 22-25 (YRVP). Residues Arg-23 and Arg-43 each coordinate substrate. Catalysis depends on proton acceptor residues Asp-47 and Asp-48. The stretch at 127–138 (VASRDAGLSWGS) is one BNR 1 repeat. Substrate contacts are provided by Tyr-177 and Tyr-179. The BNR 2 repeat unit spans residues 200-211 (FYSDDHGRTWRC). 2 residues coordinate substrate: Glu-222 and Arg-242. The stretch at 251–262 (ALSTDEGTSFLP) is one BNR 3 repeat. The tract at residues 284-357 (PAPAPNRPRD…GPRPGVSGDV (74 aa)) is disordered. A compositionally biased stretch (low complexity) spans 336–345 (RLQPRGDGPR). Residue Arg-389 participates in substrate binding. Tyr-419 acts as the Nucleophile in catalysis. Residue Glu-440 is part of the active site.

The protein belongs to the glycosyl hydrolase 33 family. In terms of processing, N-glycosylated. In terms of tissue distribution, predominant form in liver. Also expressed in brain, kidney and colon. As to expression, highly expressed in brain and at lower levels in kidney and liver.

It is found in the cell membrane. Its subcellular location is the endoplasmic reticulum membrane. The protein resides in the microsome membrane. It localises to the mitochondrion membrane. The protein localises to the cell projection. It is found in the neuron projection. Its subcellular location is the mitochondrion inner membrane. The protein resides in the mitochondrion outer membrane. It localises to the lysosome lumen. The catalysed reaction is Hydrolysis of alpha-(2-&gt;3)-, alpha-(2-&gt;6)-, alpha-(2-&gt;8)- glycosidic linkages of terminal sialic acid residues in oligosaccharides, glycoproteins, glycolipids, colominic acid and synthetic substrates.. The enzyme catalyses a ganglioside GM3 + H2O = a beta-D-galactosyl-(1-&gt;4)-beta-D-glucosyl-(1&lt;-&gt;1)-ceramide + N-acetylneuraminate. It catalyses the reaction a ganglioside GM3 (d18:1(4E)) + H2O = a beta-D-Gal-(1-&gt;4)-beta-D-Glc-(1&lt;-&gt;1)-Cer(d18:1(4E)) + N-acetylneuraminate. It carries out the reaction a ganglioside GM2 + H2O = a ganglioside GA2 + N-acetylneuraminate. The catalysed reaction is a ganglioside GM2 (d18:1(4E)) + H2O = a ganglioside GA2 (d18:1(4E)) + N-acetylneuraminate. The enzyme catalyses a ganglioside GD1a + H2O = a ganglioside GM1 + N-acetylneuraminate. It catalyses the reaction a ganglioside GD1a (d18:1(4E)) + H2O = a ganglioside GM1 (d18:1(4E)) + N-acetylneuraminate. It carries out the reaction a ganglioside GD3 + H2O = a ganglioside GM3 + N-acetylneuraminate. The catalysed reaction is a ganglioside GD3 (d18:1(4E)) + H2O = a ganglioside GM3 (d18:1(4E)) + N-acetylneuraminate. Its function is as follows. Exo-alpha-sialidase that catalyzes the hydrolytic cleavage of the terminal sialic acid (N-acetylneuraminic acid, Neu5Ac) of a glycan moiety in the catabolism of glycolipids, glycoproteins and oligosacharides. Efficiently hydrolyzes gangliosides including alpha-(2-&gt;3)-sialylated GD1a and GM3 and alpha-(2-&gt;8)-sialylated GD3. Hydrolyzes poly-alpha-(2-&gt;8)-sialylated neural cell adhesion molecule NCAM1 likely at growth cones, suppressing neurite outgrowth in hippocampal neurons. May desialylate sialyl Lewis A and X antigens at the cell surface, down-regulating these glycan epitopes recognized by SELE/E selectin in the initiation of cell adhesion and extravasation. Has sialidase activity toward mucin, fetuin and sialyllactose. This chain is Sialidase-4 (NEU4), found in Homo sapiens (Human).